The sequence spans 2541 residues: MTFTSHPQSEPLAIIGLACKYANDINSPLDLYQQVMAARSMHGPMPPSRMDAAFYYHPSSEATGTTYAKGGYFLQSDLNAFDSPFFQLSEIDVLAMDPQQKMLLENVYHALENAGIPLKDAVSSSTSVFVGCSNNDHLALANADLLLALKGKGTGTSPSILANRISWFYDFQGTSQTIDTACSSSLVAFHQGCMDVRAGKSTMSIISGVNLMEHPAPTMYLSSLGVLSPDGRSMSFDARANGYGRGEGLGTVIIKPLTAALRDGNRIRAIVRSTGSNQDGRTPGITVPSPTAQERLIREVYKAADLDPSRTGYVEAHGTGTPVGDPLEVQAISAALGMSRDSPLYVGSVKSVVGHLEGGAGMAGLISATMAVESKTIPPVAGLQTLNPRIPQRPDLKFAKEATPWPREDVRRASINSFGFGGTNAHVVLEDVEGFFSDLFGQQLPGALQLSEVTSKALVPSAMKSAVNGIPADQPPKESSVNRLFVISAFDEAGIQRNAASLASHLESMRAITGSDGEERLLNDLCHTLNEKRTRFDWRSYHVADSIDSLRNSLQNPRPIRQSPAEKVVRFIFTGQGANWAGMAYDLLVYPLFRRRIQEAAIFLKELGSDWDLYERIASQSGELDEPTFAQSSCVAVQVALVDLLASWNVTPQTVVGHSSGEIAAAYCAGQISRQAAWKVAFCRGQVCARRTDGQGRMLAAAMPVTQLEQLVARVNKGQSTAVKVGCYNSPKNLTLTGRAEDILRAKLELDDVGALNRLLPVKVAYHSDYMRDAAPEYLDLLGDLDFGDSIHADAGIKMVSSVTGRAVSAGEAQQPSYWVDNLVSPVRFSTALLASMDDPSATGAREDALIEIGPHSTLRTAIKETFADVREFQSIQYGSLLKRYETDGSTILRTFGMLVCSGHKISLAAINDRRVGAKKTPRLLTGLPSYAFDHSRSMRGTSRRIEQAKFPAYKRHELLGVPVEDTNPVEQRWRNILRPDDLPWLRMNRMNGQIHFPGVAYLLMATEAAIQRVGNTVAISGVRLGNVSMLAPLPIPDSAAGVEIQFSIYPMKIHANSGTDWSTFRIVSYDSAEKTWTEHCVGSVRVETGPHESHEPHPGNATREECTESVDIAQMYSRFTTAGMDFGEYLRNIQEMKLSPDHQACTATITAPDIPCQAHDHYSLHPCTFESILHALLHLCKSSQGPMVTTYIEEVLVLSPQDTGVCGFEACAQTQRASATTWRSDVTITANTGRQQIRVTGLDLVQLPPSEDASDAESFYVVKWKPDVKLLTSVDALRDSASMYVAQHLPTLDEHEGFQLASGIFLLDTMDYVTRTGLPALPQHHQAFMQWMEKECRSIADGTVPLLDTALFEGIRASPDRRRELLARVAQLSARGELLVRVGTQMVPILEQKIDCLEVMFGPDNLMDRTYEEGLPGQIAPSVAGYLHCLAHAQTGIKVLEVGAGTGSATKVILDSLKPTERQDGGGLVSSVSTYHFTDISAAFFEKARARFPDWADILRPKVLNIELDPADQGFEMGSYDLVIATHVLHATADLSVSLKNIRGLLKEGGDLIVIENIQPDLMCSPLAFGLLPGWWRSVEPYRKTNPLITKDQWDQELRNAGLQSRLLIDDTDEGVNEMTAFVASRVREPPATQHVCSIIYSSRYGGQYELASQVARDLPPSCTASLVDLADISPEHTSTIGIVLVGYQGLDLSELSAHEYDRVNFLLTAFHRLLWVTCDEDEVPKSAMASGLVRTARWERDHDGVNFILLGISHRVPSASAAVSQMIRVCDHAFFSHELVPRNAEFRLEGSVLLTNRLFPATGINECIASSSRPRSKQVALEAVQHPVKLTSIGPHQPNGFHFVEDPQVDEPLLPDEVKIQIRAVGLDESDVEEMNRLIPGESAGSQGTGVVVEVGPAVHDIHVGDRVMALRTGHSGSLQTVLRTHSSAVTQVPEGLSLADAAAVPLPFTTAYHGLVNVARLEPQDTILIHNAGGATGQAAVQFACMLGATVYATVESDAQRQALLDYGVDRSRLLDGPSFAQQLARRGAKGSVDVLFNLSRESLEDRDLACLSQFGRLVGVHGQGSLPAGPTNRSYATVSIRELVQVRPKALHGTLRTISDLLTSRAIRPITPVRAGYSELQTVLSQIRQGNAGPWVLEPRANDTIPVAMKPLGDYQFDPCASYLLIGGFGGIGRSVVRWMLTRGAKNFIFLSRSGASSVPAKQLCADLLDAGCGVSDTVCDVTDATAVENALQQCGKSMPPIRGCLQCSMVLEDSMLSNMSHAQFLNAITPKVQGTIHVASALSSVKSNLDFFVLLSSSAGIIGNRGQANYSAANAFLDAFAAHLVSRGYPATSISLGSVLSVGWVAENQDRLPIALSYGAISEDLLLAILEYHMDPSWGAAQSPGTCHTVAGVRSARDFQRQSIPLPGFMAYPLFSPLRAIAGASQTAEEVAEAPIAQGLRGATSMEDAVELVTRAIVYKLARIMALSAKEIDAQRSLASYGVDSLVTVDLKAWFQREVGATVASGDLLGDSTIVQLAQQAAGGSRLVSVAMKGTE.

One can recognise a Ketosynthase family 3 (KS3) domain in the interval 9–431 (SEPLAIIGLA…GTNAHVVLED (423 aa)). Active-site for beta-ketoacyl synthase activity residues include cysteine 182, histidine 317, and histidine 355. The Malonyl-CoA:ACP transacylase (MAT) domain occupies 571–888 (FIFTGQGANW…GSLLKRYETD (318 aa)). The interval 957–1092 (HELLGVPVED…GSVRVETGPH (136 aa)) is N-terminal hotdog fold. Residues 957–1251 (HELLGVPVED…GLDLVQLPPS (295 aa)) form a dehydratase (DH) domain region. The region spanning 957-1254 (HELLGVPVED…LVQLPPSEDA (298 aa)) is the PKS/mFAS DH domain. Residues 1108-1254 (TESVDIAQMY…LVQLPPSEDA (147 aa)) are C-terminal hotdog fold. Residues isoleucine 1420 and glutamate 1442 each coordinate S-adenosyl-L-methionine. The segment at 1433–1605 (HAQTGIKVLE…DQELRNAGLQ (173 aa)) is methyltransferase (CMeT) domain. The 304-residue stretch at 1838 to 2141 (HQPNGFHFVE…RQGNAGPWVL (304 aa)) folds into the Enoyl reductase (ER) domain. The Ketoreductase (KR) domain maps to 2165–2344 (ASYLLIGGFG…PATSISLGSV (180 aa)). Residues 2453 to 2530 (DAVELVTRAI…QLAQQAAGGS (78 aa)) form the Carrier domain. Serine 2490 bears the O-(pantetheine 4'-phosphoryl)serine mark.

Pantetheine 4'-phosphate serves as cofactor.

It catalyses the reaction 4 malonyl-CoA + acetyl-CoA + 5 NADPH + 9 H(+) = 7-methylmellein + 3 CO2 + 5 NADP(+) + 5 CoA + 4 H2O. The protein operates within mycotoxin biosynthesis. Functionally, highly reducing polyketide synthase; part of the gene cluster that mediates the biosynthesis of ochratoxin A (OTA), a mycotoxin composed of a chlorinated type I polyketide dihydroisocoumarin moiety linked to L-phenylalanine, and demonstrated to have nephrotoxic, immunotoxic, genotoxic, neurotoxic, and teratogenic properties. OtaA catalyzes the condensation of one acetate and 4 malonate units to form the isocoumarin group. The pathway begins with the highly reducing polyketide synthase otaA that catalyzes the formation of the isocoumarin group during the initial stages of biosynthesis, starting from one acetate and 4 malonate units, to originate the characteristic pentaketide skeleton 7-methylmellein (7-MM) of the OTA molecule. The newly identified cyclase otaY might be involved in the polyketide cyclization reaction during the initial steps of the OTA biosynthesis. 7-MM is then oxidized into 7-carboxymellein (also called ochratoxin beta) by the cytochrome P450 monooxygenase otaC. The NRPS encoded by the otaB gene is involved in the linking of phenylalanine to the dihydroisocoumarin ring. The reaction catalyzed by NRPS results in the production of ochratoxin B (OTB), which is the non-chlorinated analog of OTA and which subsequently serves as the substrate of the halogenase otaD for chlorination activity to form the final molecular structure of OTA, containing a chlorine atom in the C-5 position of the molecule. The protein is Highly reducing polyketide synthase otaA of Aspergillus carbonarius (strain ITEM 5010).